The primary structure comprises 239 residues: Ribose-5-phosphate isomerase A (239 aa).

Residues 34-37, 94-97, and 107-110 contribute to the substrate site; these read TGST, DGAD, and KGGG. Glutamate 116 (proton acceptor) is an active-site residue. Lysine 134 lines the substrate pocket.

It belongs to the ribose 5-phosphate isomerase family. In terms of assembly, homodimer.

The catalysed reaction is aldehydo-D-ribose 5-phosphate = D-ribulose 5-phosphate. It functions in the pathway carbohydrate degradation; pentose phosphate pathway; D-ribose 5-phosphate from D-ribulose 5-phosphate (non-oxidative stage): step 1/1. Catalyzes the reversible conversion of ribose-5-phosphate to ribulose 5-phosphate. This chain is Ribose-5-phosphate isomerase A, found in Treponema denticola (strain ATCC 35405 / DSM 14222 / CIP 103919 / JCM 8153 / KCTC 15104).